The primary structure comprises 92 residues: Small ribosomal subunit protein uS15c (92 aa).

The protein belongs to the universal ribosomal protein uS15 family. Part of the 30S ribosomal subunit.

It localises to the plastid. Its subcellular location is the chloroplast. This Carica papaya (Papaya) protein is Small ribosomal subunit protein uS15c (rps15).